A 130-amino-acid polypeptide reads, in one-letter code: Small ribosomal subunit protein uS11 (130 aa).

It belongs to the universal ribosomal protein uS11 family. As to quaternary structure, part of the 30S ribosomal subunit. Interacts with proteins S7 and S18. Binds to IF-3.

Its function is as follows. Located on the platform of the 30S subunit, it bridges several disparate RNA helices of the 16S rRNA. Forms part of the Shine-Dalgarno cleft in the 70S ribosome. This is Small ribosomal subunit protein uS11 from Dehalococcoides mccartyi (strain ATCC BAA-2266 / KCTC 15142 / 195) (Dehalococcoides ethenogenes (strain 195)).